A 492-amino-acid polypeptide reads, in one-letter code: Ferruginol synthase (492 aa).

A helical transmembrane segment spans residues 1–21 (METIALLAALFFIALTCFLTS). Topologically, residues 22 to 492 (GRRRNLPPGP…VPLKIIPLRP (471 aa)) are cytoplasmic. Residue cysteine 436 coordinates heme.

The protein belongs to the cytochrome P450 family. Requires heme as cofactor.

Its subcellular location is the endoplasmic reticulum membrane. The enzyme catalyses abieta-8,11,13-triene + reduced [NADPH--hemoprotein reductase] + O2 = ferruginol + oxidized [NADPH--hemoprotein reductase] + H2O + H(+). It functions in the pathway secondary metabolite biosynthesis; terpenoid biosynthesis. Functionally, cytochrome P450 enzyme (CYP) which catalyzes a unique two-electron oxidation cascade on abieta-8,11,13-triene to produce ferruginol, an intermediate in tanshinone biosynthesis. The protein is Ferruginol synthase of Isodon rubescens (Rabdosia rubescens).